Consider the following 122-residue polypeptide: Beta-2-microglobulin (122 aa).

The N-terminal stretch at Met1–Ala23 is a signal peptide. Residues Pro28 to Thr117 form the Ig-like C1-type domain. A disulfide bridge connects residues Cys48 and Cys103.

It belongs to the beta-2-microglobulin family. Heterodimer of an alpha chain and a beta chain. Beta-2-microglobulin is the beta-chain of major histocompatibility complex class I molecules.

The protein resides in the secreted. Component of the class I major histocompatibility complex (MHC). Involved in the presentation of peptide antigens to the immune system. This Acipenser baerii (Siberian sturgeon) protein is Beta-2-microglobulin (b2m).